The primary structure comprises 322 residues: Exosome complex component RRP4 homolog (322 aa).

The 79-residue stretch at 94–172 (GDIVVGRVIE…HDGSLQLQAR (79 aa)) folds into the S1 motif domain. One can recognise a KH domain in the interval 182–237 (GQLLKVDPYLVKRSKHHFHYVESLGIDLIIGCNGFIWVGEHVEVRDPMAIDDQKDE).

This sequence belongs to the RRP4 family. As to quaternary structure, component of the RNA exosome complex. Interacts with RPP41. In terms of tissue distribution, expressed in roots, stems, rosette and cauline leaves, flowers and siliques.

It localises to the cytoplasm. The protein localises to the nucleus. It is found in the nucleolus. Its function is as follows. Non-catalytic component of the RNA exosome complex which has 3'-&gt;5' exoribonuclease activity and participates in a multitude of cellular RNA processing, maturation and degradation events. In vitro, is an active and distributive 3'-&gt;5' exonuclease requiring a free 3'-OH on the substrate and releasing nucleoside 5'-monophosphates. Required for normal embryo development. In Arabidopsis thaliana (Mouse-ear cress), this protein is Exosome complex component RRP4 homolog.